The chain runs to 336 residues: Mitochondrial fission regulator 2 (336 aa).

The stretch at 139 to 166 forms a coiled coil; it reads QPDALLKISALEEELQRLRAQIATIITA. The tract at residues 296-336 is disordered; it reads HRQRDDSFGKENHSAEPSPFSSPDTPRIFQHTRRSQGRIHL. Residues 297-309 are compositionally biased toward basic and acidic residues; that stretch reads RQRDDSFGKENHS. Over residues 325 to 336 the composition is skewed to basic residues; that stretch reads QHTRRSQGRIHL.

Belongs to the MTFR1 family.

The protein resides in the mitochondrion. Its function is as follows. May play a role in mitochondrial aerobic respiration. Can also promote mitochondrial fission. The polypeptide is Mitochondrial fission regulator 2 (mtfr2) (Danio rerio (Zebrafish)).